We begin with the raw amino-acid sequence, 490 residues long: Betaine aldehyde dehydrogenase (490 aa).

K(+) contacts are provided by Thr26, Ile27, and Asp93. NAD(+) is bound at residue 150–152; that stretch reads GAW. The active-site Charge relay system is Lys162. Residue 176 to 179 participates in NAD(+) binding; it reads KPSE. Val180 contacts K(+). 230–233 contributes to the NAD(+) binding site; it reads GVAS. Leu246 provides a ligand contact to K(+). Glu252 functions as the Proton acceptor in the catalytic mechanism. 3 residues coordinate NAD(+): Gly254, Cys286, and Glu387. Cys286 functions as the Nucleophile in the catalytic mechanism. At Cys286 the chain carries Cysteine sulfenic acid (-SOH). Positions 457 and 460 each coordinate K(+). The Charge relay system role is filled by Glu464.

Belongs to the aldehyde dehydrogenase family. As to quaternary structure, dimer of dimers. K(+) is required as a cofactor.

It catalyses the reaction betaine aldehyde + NAD(+) + H2O = glycine betaine + NADH + 2 H(+). Its pathway is amine and polyamine biosynthesis; betaine biosynthesis via choline pathway; betaine from betaine aldehyde: step 1/1. In terms of biological role, involved in the biosynthesis of the osmoprotectant glycine betaine. Catalyzes the irreversible oxidation of betaine aldehyde to the corresponding acid. In Escherichia coli O45:K1 (strain S88 / ExPEC), this protein is Betaine aldehyde dehydrogenase.